A 40-amino-acid chain; its full sequence is Photosystem II reaction center protein J (40 aa).

Residues 8–28 (IPLWLIGTLTGILVIGLIGIF) form a helical membrane-spanning segment.

This sequence belongs to the PsbJ family. In terms of assembly, PSII is composed of 1 copy each of membrane proteins PsbA, PsbB, PsbC, PsbD, PsbE, PsbF, PsbH, PsbI, PsbJ, PsbK, PsbL, PsbM, PsbT, PsbX, PsbY, PsbZ, Psb30/Ycf12, at least 3 peripheral proteins of the oxygen-evolving complex and a large number of cofactors. It forms dimeric complexes.

The protein localises to the plastid. It localises to the chloroplast thylakoid membrane. One of the components of the core complex of photosystem II (PSII). PSII is a light-driven water:plastoquinone oxidoreductase that uses light energy to abstract electrons from H(2)O, generating O(2) and a proton gradient subsequently used for ATP formation. It consists of a core antenna complex that captures photons, and an electron transfer chain that converts photonic excitation into a charge separation. In Phalaenopsis aphrodite subsp. formosana (Moth orchid), this protein is Photosystem II reaction center protein J.